We begin with the raw amino-acid sequence, 184 residues long: METIEVLVGRIGKPHGIRGELTLDVRTDEPERRFAPGAVLRAEPPAGSASRLRRVTVRSARWHQSTLLVAFEEVADRTAAEAARGILLHATVPADAAPDDPDEYYDHQLVGLAAYDVSGAALGSVTGLVHGGAQDLLTVRTPDGRDALVPFVKALVPEVDLAGRRVVIADRPGLVTPLPEDDEH.

A PRC barrel domain is found at 101–174 (PDEYYDHQLV…RVVIADRPGL (74 aa)).

Belongs to the RimM family. In terms of assembly, binds ribosomal protein uS19.

The protein resides in the cytoplasm. Its function is as follows. An accessory protein needed during the final step in the assembly of 30S ribosomal subunit, possibly for assembly of the head region. Essential for efficient processing of 16S rRNA. May be needed both before and after RbfA during the maturation of 16S rRNA. It has affinity for free ribosomal 30S subunits but not for 70S ribosomes. The sequence is that of Ribosome maturation factor RimM from Nocardioides sp. (strain ATCC BAA-499 / JS614).